Consider the following 724-residue polypeptide: Aquaglyceroporin-4 (724 aa).

3 disordered regions span residues 1-167, 248-267, and 302-396; these read MADE…SIRR, INMA…NQAD, and AHGL…DLDG. Over 1-434 the chain is Cytoplasmic; the sequence is MADEEIKPTS…VIRLRFREPL (434 aa). The segment covering 87-96 has biased composition (polar residues); the sequence is LTGQVPQDND. Positions 252–265 are enriched in low complexity; it reads QQQQQQQQQQPQNQ. Composition is skewed to polar residues over residues 307-325 and 360-370; these read SPTN…TAPS and PSQTSQNSQNE. Residues 435–455 form a helical membrane-spanning segment; it reads AELLAVTCQLTLGFCADLVVV. The Extracellular segment spans residues 456–472; that stretch reads TSGKNASPAGNEATTDW. A helical membrane pass occupies residues 473–493; the sequence is AWGLASMLGIYIAGGISGAHL. An NPA 1 motif is present at residues 494-496; it reads NPA. Topologically, residues 494–513 are cytoplasmic; the sequence is NPAISIMLWIYRGFPLRKVP. A helical transmembrane segment spans residues 514 to 534; sequence MYVLAQILGAFIAALISFGLY. Topologically, residues 535-567 are extracellular; sequence QTNIVEYGGTDLKTSDTMGAFITYPRYPWINAS. N-linked (GlcNAc...) asparagine glycosylation is present at Asn565. A helical transmembrane segment spans residues 568-588; it reads TSFFTEFVGTAILAVAVLALG. The Cytoplasmic segment spans residues 589 to 595; it reads DDMNAPP. A helical transmembrane segment spans residues 596–616; it reads GAGMSAFILGLVITVLSMAFG. Topologically, residues 617 to 647 are extracellular; the sequence is YNTGAALNPSRDLGPRLALAALGYGKDLFTD. The NPA 2 motif lies at 624–626; sequence NPS. The helical transmembrane segment at 648–668 threads the bilayer; it reads VYWIWGNWCAPILGAIFGAFL. At 669 to 724 the chain is on the cytoplasmic side; it reads YDAAIFAGGESPVNYPRKRIKRAGHKWRKKWGVRLRKMKPAKKGEDEAYRRWKESQ.

This sequence belongs to the MIP/aquaporin (TC 1.A.8) family.

It is found in the membrane. The catalysed reaction is H2O(in) = H2O(out). The enzyme catalyses glycerol(in) = glycerol(out). Functionally, water channel required to facilitate the transport of water across membranes. May play a role in the vegetative growth. The polypeptide is Aquaglyceroporin-4 (Botryotinia fuckeliana (strain B05.10) (Noble rot fungus)).